The sequence spans 851 residues: B-box type zinc finger protein ncl-1 (851 aa).

Positions 71–91 (GFGFGSPSSTTSSSPPLSNSP) are disordered. Residues 76 to 91 (SPSSTTSSSPPLSNSP) are compositionally biased toward low complexity. The B box-type 1; atypical zinc finger occupies 127 to 174 (VPAVHCSGCKSNETATSFCQDCNANLCDNCTMAHKFMHCFADHRVVSL). Zn(2+) is bound by residues cysteine 132, cysteine 135, cysteine 156, and histidine 160. Positions 176–197 (TPGTGSSSSSTSSSSSASSTSS) are enriched in low complexity. Residues 176–211 (TPGTGSSSSSTSSSSSASSTSSHQVPSLGGKQSPDS) form a disordered region. The B box-type 2 zinc finger occupies 218–261 (KRSVLCLQHRASELVFFCVSCNLAICRDCTVSDHPSGTHQYELI). Residues cysteine 223, histidine 226, cysteine 246, and histidine 251 each contribute to the Zn(2+) site. Residues 303-331 (SLHNAHAQLEETVSNLINVIQDQKKTLAK) adopt a coiled-coil conformation. NHL repeat units lie at residues 573–616 (HCKF…FDKE), 620–665 (KFQF…YNQY), 666–707 (GQFL…FDMF), 708–750 (GNIL…FSYE), and 751–794 (GQYL…FSQD).

As to expression, present in cells in which nucleoli are absent, and absent from large cells in which nucleoli are prominent. Highly expressed in the gonads.

It is found in the cytoplasm. In terms of biological role, translational repressor that inhibits protein synthesis. Represses the translation of mRNAs such as fib-1, probably by being recruited by RNA-binding protein nos-2 and the Pumilio proteins puf-5, puf-8 and puf-9 to the consensus core PUF binding motif in the 3'-UTR of fib-1 mRNA. Negatively regulates ribosomal RNA (rRNA) synthesis, ribosomal protein synthesis and nucleolus size. Its role in the negative regulation of nucleolus size is most likely through its negative regulation of the translation of proteins such as the rRNA 2'-O-methyltransferase fib-1, and dao-5. Might act directly as a transcription factor to inhibit RNA polymerase I (rRNA) and III (5S RNA) transcription. Plays a role in embryonic development, and in particular, is involved in regulating the localization of proteins, such as par-2, that are required for embryonic cell polarity. Plays a role in the regulation of lifespan, and the response to nutrient availability. This is B-box type zinc finger protein ncl-1 from Caenorhabditis elegans.